Reading from the N-terminus, the 376-residue chain is Protein RecA (376 aa).

66–73 contacts ATP; that stretch reads GPESSGKT. Residues 329–376 form a disordered region; that stretch reads VGVKPEDLTAEPGADAAGAAADAEAPAKSVPAPAAKSAKGSKAAAAKS. Residues 338–376 show a composition bias toward low complexity; it reads AEPGADAAGAAADAEAPAKSVPAPAAKSAKGSKAAAAKS.

This sequence belongs to the RecA family.

It localises to the cytoplasm. In terms of biological role, can catalyze the hydrolysis of ATP in the presence of single-stranded DNA, the ATP-dependent uptake of single-stranded DNA by duplex DNA, and the ATP-dependent hybridization of homologous single-stranded DNAs. It interacts with LexA causing its activation and leading to its autocatalytic cleavage. The sequence is that of Protein RecA from Streptomyces rimosus.